The primary structure comprises 186 residues: Threonylcarbamoyl-AMP synthase (186 aa).

The region spanning 5–186 (TQSINDAVKC…DAITGEILRL (182 aa)) is the YrdC-like domain.

The protein belongs to the SUA5 family. TsaC subfamily.

Its subcellular location is the cytoplasm. The catalysed reaction is L-threonine + hydrogencarbonate + ATP = L-threonylcarbamoyladenylate + diphosphate + H2O. In terms of biological role, required for the formation of a threonylcarbamoyl group on adenosine at position 37 (t(6)A37) in tRNAs that read codons beginning with adenine. Catalyzes the conversion of L-threonine, HCO(3)(-)/CO(2) and ATP to give threonylcarbamoyl-AMP (TC-AMP) as the acyladenylate intermediate, with the release of diphosphate. In Coxiella burnetii (strain RSA 493 / Nine Mile phase I), this protein is Threonylcarbamoyl-AMP synthase.